Reading from the N-terminus, the 346-residue chain is UDP-N-acetylenolpyruvoylglucosamine reductase (346 aa).

The 172-residue stretch at 23-194 (FDVRAQFACR…TSVTFRLPKV (172 aa)) folds into the FAD-binding PCMH-type domain. Arg170 is a catalytic residue. The active-site Proton donor is the Ser246. Glu342 is an active-site residue.

Belongs to the MurB family. The cofactor is FAD.

The protein resides in the cytoplasm. The enzyme catalyses UDP-N-acetyl-alpha-D-muramate + NADP(+) = UDP-N-acetyl-3-O-(1-carboxyvinyl)-alpha-D-glucosamine + NADPH + H(+). It functions in the pathway cell wall biogenesis; peptidoglycan biosynthesis. Cell wall formation. The protein is UDP-N-acetylenolpyruvoylglucosamine reductase of Paraburkholderia phytofirmans (strain DSM 17436 / LMG 22146 / PsJN) (Burkholderia phytofirmans).